A 477-amino-acid polypeptide reads, in one-letter code: Cysteine--tRNA ligase (477 aa).

Cys29 lines the Zn(2+) pocket. A 'HIGH' region motif is present at residues 31 to 41 (PTVYDYPHLGH). The Zn(2+) site is built by Cys209, His234, and Glu238. The short motif at 266–270 (KMSKS) is the 'KMSKS' region element. Residue Lys269 participates in ATP binding.

This sequence belongs to the class-I aminoacyl-tRNA synthetase family. Zn(2+) serves as cofactor.

The protein resides in the cytoplasm. The catalysed reaction is tRNA(Cys) + L-cysteine + ATP = L-cysteinyl-tRNA(Cys) + AMP + diphosphate. The protein is Cysteine--tRNA ligase (cysS) of Pyrococcus abyssi (strain GE5 / Orsay).